A 94-amino-acid chain; its full sequence is Protein EGG APPARATUS-1 (94 aa).

Over 1–15 (MSSCPAIVNMKDDDG) the chain is Cytoplasmic. The helical; Signal-anchor for type II membrane protein transmembrane segment at 16-36 (IGAMGAAVAFAAMGVFGIYFL) threads the bilayer. Over 37-94 (WPVVGPTSAGMMMKAPGAAGWVICRAVFEANPQLYFTILRTAGAAAAAATFAACSIAS) the chain is Extracellular.

Post-translationally, possible proteolysis of the C-terminal region from the predicted transmembrane domain to permit secretion and transport of the mature protein to the cell walls of the nucellus, allowing the spreading from the egg cell apparatus to the micropylar opening of the ovule. As to expression, expressed only in the egg apparatus, consisting of the egg cell and two synergids. Not detected in the central cell, antipodals, and nucellar and integumental cells.

Its subcellular location is the membrane. Involved in short-range signaling required for pollen tube attraction by the female gametophyte. Required for female fertility. This chain is Protein EGG APPARATUS-1 (Ea1), found in Zea mays (Maize).